A 505-amino-acid polypeptide reads, in one-letter code: Forkhead box protein O4 (505 aa).

3 disordered regions span residues 1-66 (MDPE…HSEP), 175-244 (SSWW…SPCP), and 257-276 (RPRS…PMRP). Residue Thr-32 is modified to Phosphothreonine; by PKB/AKT1. Residues 97–215 (RRNAWGNQSY…RGRSKGPKKK (119 aa)) form a required for interaction with FOXK1 region. The fork-head DNA-binding region spans 100–188 (AWGNQSYAEL…MLNPDGGKGG (89 aa)). The residue at position 197 (Ser-197) is a Phosphoserine; by PKB/AKT1. Residues 205-216 (LRGRSKGPKKKP) show a composition bias toward basic residues. Over residues 257 to 271 (RPRSSSNASTVSTRL) the composition is skewed to polar residues. At Ser-262 the chain carries Phosphoserine; by PKB/AKT1.

Interacts with CREBBP/CBP, MYOCD, SIRT1, SRF and YWHAZ. Acetylated by CREBBP/CBP and deacetylated by SIRT1. Binding of YWHAZ inhibits DNA-binding. Interacts with USP7; the interaction is enhanced in presence of hydrogen peroxide and occurs independently of TP53. Interacts with NLK, and this inhibits monoubiquitination and transcriptional activity. Interacts with FOXK1; the interaction inhibits MEF2C transactivation activity. Post-translationally, acetylation by CREBBP/CBP is induced by oxidative stress and inhibits transcriptional activity. Deacetylation by SIRT1 is NAD-dependent and stimulates transcriptional activity. Phosphorylation by PKB/AKT1 inhibits transcriptional activity and is responsible for cytoplasmic localization. May be phosphorylated at multiple sites by NLK. In terms of processing, monoubiquitinated; monoubiquitination is induced by oxidative stress and reduced by deacetylase inhibitors; results in its relocalization to the nucleus and its increased transcriptional activity. Deubiquitinated by USP7; deubiquitination is induced by oxidative stress; enhances its interaction with USP7 and consequently, deubiquitination; increases its translocation to the cytoplasm and inhibits its transcriptional activity. Hydrogene-peroxide-induced ubiquitination and USP7-mediated deubiquitination have no major effect on its protein stability. As to expression, strongly expressed in brown adipose tissue and weakly in white adipose tissue (at protein level). Expressed in skeletal muscle.

It is found in the cytoplasm. The protein localises to the nucleus. Transcription factor involved in the regulation of the insulin signaling pathway. Binds to insulin-response elements (IREs) and can activate transcription of IGFBP1. Down-regulates expression of HIF1A and suppresses hypoxia-induced transcriptional activation of HIF1A-modulated genes. Also involved in negative regulation of the cell cycle. Involved in increased proteasome activity in embryonic stem cells (ESCs) by activating expression of PSMD11 in ESCs, leading to enhanced assembly of the 26S proteasome, followed by higher proteasome activity. Represses smooth muscle cell differentiation by inhibiting the transcriptional coactivator activity of myocardin. This chain is Forkhead box protein O4 (Foxo4), found in Mus musculus (Mouse).